We begin with the raw amino-acid sequence, 513 residues long: Glycine/sarcosine/betaine reductase complex component C subunit beta (513 aa).

Heterooctamer of four alpha and four beta subunits. Component of the glycine, sarcosine and betaine reductase complexes, together with proteins A and B.

The catalysed reaction is acetyl phosphate + [thioredoxin]-disulfide + NH4(+) + H2O = [thioredoxin]-dithiol + glycine + phosphate + H(+). It carries out the reaction acetyl phosphate + methylamine + [thioredoxin]-disulfide + H2O = sarcosine + [thioredoxin]-dithiol + phosphate + H(+). It catalyses the reaction acetyl phosphate + trimethylamine + [thioredoxin]-disulfide + H2O = glycine betaine + [thioredoxin]-dithiol + phosphate + H(+). Functionally, in the first step of glycine, betaine and sarcosine reductases, the substrate is bound to component PB via a Schiff base intermediate. Then the PB-activated substrate is nucleophilically attacked by the selenol anion of component PA to transform it to a carboxymethylated selenoether and the respective amine. By action of component PC, acetyl phosphate is formed, leaving component PA in its oxidized state. Finally component PA becomes reduced by the thioredoxin system to start a new catalytic cycle of reductive deamination. The protein is Glycine/sarcosine/betaine reductase complex component C subunit beta (grdC) of Peptoclostridium acidaminophilum (Eubacterium acidaminophilum).